Reading from the N-terminus, the 564-residue chain is Potassium-transporting ATPase potassium-binding subunit (564 aa).

10 consecutive transmembrane segments (helical) span residues 4 to 24 (YDYWLIIAFFAVVLVPAPFLG), 67 to 87 (MLALLAFNLAGFLLLFAILLF), 135 to 155 (AGLTVQNFVSAATGLAVLVAL), 179 to 199 (LYGLLPLCLVLALFLVWQGVP), 254 to 274 (WANLFELAAIILIPVALVFTF), 286 to 306 (AILGCMLALFLIGGATSLWAE), 382 to 402 (AGMYGMLLNVLIAVFLAGLMI), 420 to 440 (LLVVTLLVMPVGVLVLGAIAA), 487 to 507 (LMLGLGMLIGRFGYILPVLAL), and 528 to 548 (GPLFVTLLTVTILLVGGLTFL).

The protein belongs to the KdpA family. In terms of assembly, the system is composed of three essential subunits: KdpA, KdpB and KdpC.

It is found in the cell inner membrane. Functionally, part of the high-affinity ATP-driven potassium transport (or Kdp) system, which catalyzes the hydrolysis of ATP coupled with the electrogenic transport of potassium into the cytoplasm. This subunit binds the periplasmic potassium ions and delivers the ions to the membrane domain of KdpB through an intramembrane tunnel. The polypeptide is Potassium-transporting ATPase potassium-binding subunit (Pseudomonas fluorescens (strain SBW25)).